The sequence spans 1103 residues: Detocs histidine-protein kinase DtcA (1103 aa).

Histidine 758 bears the Phosphohistidine; by autocatalysis mark. Residues 818–851 form a TPR repeat; sequence TIINDAKEKVHINTGEFIESAKVFNYAIEIEFVE.

In terms of processing, autophosphorylated.

The catalysed reaction is ATP + protein L-histidine = ADP + protein N-phospho-L-histidine.. Functionally, sensor-kinase member of the two-component regulatory system Detocs that confers resistance to bacteriophage. When the system (DtcA-DtcB-DtcC) is expressed in a susceptible E.coli (strain MG1655) it confers resistance to bacteriophages T2, T4, T5, T7, SECphi4, SECphi6 and SECphi27; the level of resistance varies, resistance to T2, T7 and SECphi4 is not very high. DtcA (this subunit) probably autophosphorylates upon sensing viral infection, and subsequently transfers the phosphate signal to DtcC which activates it, leading to an antiviral defense; DtcB may scavenge phosphorylation signals from accidental activation of DtcA. In Enterobacter cloacae (strain JD6301), this protein is Detocs histidine-protein kinase DtcA.